Consider the following 519-residue polypeptide: Protein BANP (519 aa).

A phosphoserine mark is found at Ser19, Ser90, and Ser100. Residues 53-90 are a coiled coil; that stretch reads IKTICLRLDSIEAKLQALEATCKSLEEKLDLVTNKQHS. Lys133 participates in a covalent cross-link: Glycyl lysine isopeptide (Lys-Gly) (interchain with G-Cter in SUMO2). An interaction with CUX1 and HDAC1 region spans residues 152-342; it reads NAVPGRRQNT…FSRRTPNSSS (191 aa). Positions 168-177 are enriched in basic and acidic residues; it reads GQEDSHHEDG. Residues 168–196 form a disordered region; sequence GQEDSHHEDGESGSEASDSVSSCGQAGSQ. A compositionally biased stretch (low complexity) spans 180–189; the sequence is GSEASDSVSS. Positions 226-322 constitute a BEN domain; it reads EMRVRCAIIP…SKCRTAWRRK (97 aa). Lys275 is subject to N6-acetyllysine. A disordered region spans residues 327 to 364; sequence SLAVKSFSRRTPNSSSYCPSEPMMSTPPPASELPQPQP. Over residues 335 to 344 the composition is skewed to polar residues; sequence RRTPNSSSYC. A phosphothreonine mark is found at Thr337 and Thr352. Positions 342–393 are DNA-binding; that stretch reads SYCPSEPMMSTPPPASELPQPQPQPQALHYALANAQQVQIHQIGEDGQVQVG. A compositionally biased stretch (pro residues) spans 351–364; that stretch reads STPPPASELPQPQP.

Belongs to the BANP/SMAR1 family. Part of a corepressor complex containing BANP, HDAC1, SIN3A, SIN3B, RBL1 and RBL2. Forms a trimeric complex in the nucleus consisting of BANP, HDAC6 and KHDRBS1/SAM68; HDAC6 keeps KHDRBS1 in a deacetylated state which inhibits the inclusion of CD44 alternate exons. The complex is disrupted by MAPK1/MAPK3-mediated phosphorylation of BANP which results in BANP export to the cytoplasm. This facilitates acetylation of KHDRBS1 and CD44 variant exon inclusion. Interacts with TP53. Interacts with CUX1/CDP. Interacts with HDAC1. Post-translationally, MAPK1/MAPK3-mediated phosphorylation at Thr-337 and Thr-352 results in export to the cytoplasm. In terms of tissue distribution, down-regulated in breast cancer cell lines.

It is found in the nucleus. Its subcellular location is the nucleus speckle. The protein resides in the cytoplasm. Controls V(D)J recombination during T-cell development by repressing T-cell receptor (TCR) beta enhancer function. Binds to scaffold/matrix attachment region beta (S/MARbeta), an ATC-rich DNA sequence located upstream of the TCR beta enhancer. Represses cyclin D1 transcription by recruiting HDAC1 to its promoter, thereby diminishing H3K9ac, H3S10ph and H4K8ac levels. Promotes TP53 activation, which causes cell cycle arrest. Plays a role in the regulation of alternative splicing. Binds to CD44 pre-mRNA and negatively regulates the inclusion of CD44 proximal variable exons v2-v6 but has no effect on distal variable exons v7-v10. The chain is Protein BANP (BANP) from Homo sapiens (Human).